A 311-amino-acid polypeptide reads, in one-letter code: Sulfate adenylyltransferase subunit 2 (311 aa).

It belongs to the PAPS reductase family. CysD subfamily. Heterodimer composed of CysD, the smaller subunit, and CysN.

It carries out the reaction sulfate + ATP + H(+) = adenosine 5'-phosphosulfate + diphosphate. It functions in the pathway sulfur metabolism; hydrogen sulfide biosynthesis; sulfite from sulfate: step 1/3. Functionally, with CysN forms the ATP sulfurylase (ATPS) that catalyzes the adenylation of sulfate producing adenosine 5'-phosphosulfate (APS) and diphosphate, the first enzymatic step in sulfur assimilation pathway. APS synthesis involves the formation of a high-energy phosphoric-sulfuric acid anhydride bond driven by GTP hydrolysis by CysN coupled to ATP hydrolysis by CysD. This Caulobacter vibrioides (strain ATCC 19089 / CIP 103742 / CB 15) (Caulobacter crescentus) protein is Sulfate adenylyltransferase subunit 2.